The chain runs to 125 residues: Glucose-1-phosphate adenylyltransferase small subunit (125 aa).

The protein belongs to the bacterial/plant glucose-1-phosphate adenylyltransferase family. Heterotetramer. Leaves.

It localises to the plastid. The protein localises to the chloroplast. It is found in the amyloplast. It carries out the reaction alpha-D-glucose 1-phosphate + ATP + H(+) = ADP-alpha-D-glucose + diphosphate. It participates in glycan biosynthesis; starch biosynthesis. Activated by 3'phosphoglycerate, inhibited by orthophosphate. Allosteric regulation. Its function is as follows. This protein plays a role in synthesis of starch. It catalyzes the synthesis of the activated glycosyl donor, ADP-glucose from Glc-1-P and ATP. The protein is Glucose-1-phosphate adenylyltransferase small subunit (GLG1) of Zea mays (Maize).